Consider the following 482-residue polypeptide: MAKPTVVLLPVWGAGHFMPMIEAGKRLLRGSGGALSVTVLLMPAPTPDAAVDIAAQVKREEASGADDISFRHLPAVDMPTGHTGVEEWISRILRSHAPNVRAAIAGLDCPVAALVTDIFCTPALEVSRELGVPGYVYFPCSASMLALLLRSPGLDEEVAVEFEEMDGAIRIPGLPPVPPSALPSTMLDRKKSTYDWFVATGRGYMNATGFIVNTAAELEQSVIDAIADGRCTRGVPAPTVYPIGPVLYFPPPPEEQPHECVRWLDAQPPASVLFLCFGSKGLLPPPKVREIAAALGRSGGHRFLWVLRGPPKDSRHGQRVPTDAMLDELLPEGFLERTKGRGLVWPTRAPQKEILAHAAVGGFVTHCGWNSILESLWFGVPVLPWPLDAEQHFNAFTLVAHLGVAVPLGMDRRRDNFVEAAELERAVRSLMDDASEEGRKARAKAAETRVVCRKAVEEGGSSSTAFRRLTDDIVRRGAVQIR.

Residue His-16 is the Proton acceptor of the active site. Asp-117 functions as the Charge relay in the catalytic mechanism. UDP-binding residues include Ser-279, Trp-345, Ala-349, His-366, Asn-370, Ser-371, and Glu-374.

It belongs to the UDP-glycosyltransferase family.

Its subcellular location is the endoplasmic reticulum. It localises to the nucleus. The enzyme catalyses malvidin + UDP-alpha-D-galactose = malvidin 3-O-beta-D-galactoside + UDP + H(+). Its pathway is pigment biosynthesis; anthocyanin biosynthesis. In terms of biological role, UDP-glycosyltransferase which uses UDP-galactose and malvidin as substrates to catalyze the biosynthesis of malvidin 3-O-galactoside, an anthocyanin conferring purple pigmentation. In Oryza sativa subsp. indica (Rice), this protein is Malvidin galactosylase UGT88C3.